The sequence spans 207 residues: Guanylate kinase (207 aa).

One can recognise a Guanylate kinase-like domain in the interval 6 to 185 (GLLIVLSGPS…AKNRIQCIVE (180 aa)). 13–20 (GPSGVGKG) serves as a coordination point for ATP.

The protein belongs to the guanylate kinase family.

Its subcellular location is the cytoplasm. The catalysed reaction is GMP + ATP = GDP + ADP. Functionally, essential for recycling GMP and indirectly, cGMP. This is Guanylate kinase from Staphylococcus aureus (strain USA300).